Consider the following 121-residue polypeptide: uncharacterized protein (121 aa).

Residues 1–23 (MNFSTVFQAIIAVLGLTTVTALA) form the signal peptide. N68 and N84 each carry an N-linked (GlcNAc...) asparagine glycan.

N-glycosylated.

This is an uncharacterized protein from Saccharomyces cerevisiae (strain ATCC 204508 / S288c) (Baker's yeast).